An 899-amino-acid chain; its full sequence is Nuclear factor NF-kappa-B p100 subunit (899 aa).

2 positions are modified to phosphoserine: Ser-23 and Ser-161. The 190-residue stretch at 35 to 224 folds into the RHD domain; it reads ADGPYLVIVE…QPIHDSKSPG (190 aa). The Nuclear localization signal signature appears at 337 to 341; that stretch reads RKRRK. Positions 346 to 377 are GRR; it reads FSQPFGGGSHMGGGSGGSAGGYGGAGGGGSLG. The tract at residues 403–434 is disordered; that stretch reads GGAQMAGSRRDTDAGEGAEEPRTPPEAPQGEP. Residues 410–425 are compositionally biased toward basic and acidic residues; the sequence is SRRDTDAGEGAEEPRT. Phosphothreonine is present on Thr-425. ANK repeat units follow at residues 487-516, 526-555, 559-590, 599-628, 633-663, and 667-696; these read NGDT…HAQY, LHQT…DPTL, HGDS…HAVP, EGLY…EVEA, GGRT…NVNA, and AGNT…DIHA. The tract at residues 698-734 is disordered; it reads NEEPLCPLPSPSTSGSDSDSEGPERDTQRNFRGHTPL. Phosphoserine is present on residues Ser-713, Ser-715, and Ser-717. The stretch at 729-755 is one ANK 7 repeat; it reads RGHTPLDLTCSTKVKTLLLNAAQNTTE. In terms of domain architecture, Death spans 764–851; the sequence is AGPGLSLGDA…EGVRLLKGPE (88 aa). Position 812 is a phosphoserine (Ser-812). The span at 851 to 865 shows a compositional bias: basic and acidic residues; sequence ETRDKLPSTEVKEDS. Positions 851–899 are disordered; sequence ETRDKLPSTEVKEDSAYGSQSVEQEAEKLCPPPEPPGGLCHGHPQPQVH. A Glycyl lysine isopeptide (Lys-Gly) (interchain with G-Cter in ubiquitin) cross-link involves residue Lys-855. Phosphoserine; by MAP3K14 is present on residues Ser-865 and Ser-869. Over residues 887–899 the composition is skewed to low complexity; that stretch reads GGLCHGHPQPQVH.

In terms of assembly, component of the NF-kappa-B RelB-p52 complex. Homodimer; component of the NF-kappa-B p52-p52 complex. Component of the NF-kappa-B p65-p52 complex. Component of the NF-kappa-B p52-c-Rel complex. NFKB2/p52 interacts with NFKBIE. Component of a complex consisting of the NF-kappa-B p50-p50 homodimer and BCL3. Directly interacts with MEN1. Post-translationally, while translation occurs, the particular unfolded structure after the GRR repeat promotes the generation of p52 making it an acceptable substrate for the proteasome. This process is known as cotranslational processing. The processed form is active and the unprocessed form acts as an inhibitor (I kappa B-like), being able to form cytosolic complexes with NF-kappa B, trapping it in the cytoplasm. Complete folding of the region downstream of the GRR repeat precludes processing. In terms of processing, subsequent to MAP3K14-dependent serine phosphorylation, p100 polyubiquitination occurs then triggering its proteasome-dependent processing. Constitutive processing is tightly suppressed by its C-terminal processing inhibitory domain, named PID, which contains the death domain. Post-translationally, ubiquitinated by TRIM55; leading to processing by VCP and subsequent ubiquitin-dependent protein degradation by the proteasome. As to expression, highly expressed in lymph nodes and thymus.

It localises to the nucleus. The protein resides in the cytoplasm. NF-kappa-B is a pleiotropic transcription factor present in almost all cell types and is the endpoint of a series of signal transduction events that are initiated by a vast array of stimuli related to many biological processes such as inflammation, immunity, differentiation, cell growth, tumorigenesis and apoptosis. NF-kappa-B is a homo- or heterodimeric complex formed by the Rel-like domain-containing proteins RELA/p65, RELB, NFKB1/p105, NFKB1/p50, REL and NFKB2/p52. The dimers bind at kappa-B sites in the DNA of their target genes and the individual dimers have distinct preferences for different kappa-B sites that they can bind with distinguishable affinity and specificity. Different dimer combinations act as transcriptional activators or repressors, respectively. NF-kappa-B is controlled by various mechanisms of post-translational modification and subcellular compartmentalization as well as by interactions with other cofactors or corepressors. NF-kappa-B complexes are held in the cytoplasm in an inactive state complexed with members of the NF-kappa-B inhibitor (I-kappa-B) family. In a conventional activation pathway, I-kappa-B is phosphorylated by I-kappa-B kinases (IKKs) in response to different activators, subsequently degraded thus liberating the active NF-kappa-B complex which translocates to the nucleus. In a non-canonical activation pathway, the MAP3K14-activated CHUK/IKKA homodimer phosphorylates NFKB2/p100 associated with RelB, inducing its proteolytic processing to NFKB2/p52 and the formation of NF-kappa-B RelB-p52 complexes. The NF-kappa-B heterodimeric RelB-p52 complex is a transcriptional activator. The NF-kappa-B p52-p52 homodimer is a transcriptional repressor. NFKB2 appears to have dual functions such as cytoplasmic retention of attached NF-kappa-B proteins by p100 and generation of p52 by a cotranslational processing. The proteasome-mediated process ensures the production of both p52 and p100 and preserves their independent function. p52 binds to the kappa-B consensus sequence 5'-GGRNNYYCC-3', located in the enhancer region of genes involved in immune response and acute phase reactions. p52 and p100 are respectively the minor and major form; the processing of p100 being relatively poor. Isoform p49 is a subunit of the NF-kappa-B protein complex, which stimulates the HIV enhancer in synergy with p65. In concert with RELB, regulates the circadian clock by repressing the transcriptional activator activity of the CLOCK-BMAL1 heterodimer. In Mus musculus (Mouse), this protein is Nuclear factor NF-kappa-B p100 subunit (Nfkb2).